The following is a 511-amino-acid chain: Cytochrome P450 705A5 (511 aa).

Residues 12–30 (CFIFLLLCLFSRLSYDLFF) traverse the membrane as a helical segment. C454 is a binding site for heme.

This sequence belongs to the cytochrome P450 family. The cofactor is heme. In terms of tissue distribution, expressed primarily in the root epidermis.

Its subcellular location is the membrane. In terms of biological role, converts thalian-diol to a desaturated thalian-diol. This is Cytochrome P450 705A5 (CYP705A5) from Arabidopsis thaliana (Mouse-ear cress).